The following is a 443-amino-acid chain: Transmembrane protein 184C (443 aa).

The next 7 helical transmembrane spans lie at 15–35, 46–66, 84–104, 182–202, 210–230, 252–272, and 284–304; these read LVVLLYIVGLIVGVPICIWKL, AWFIAGIFVLMTIPISLWGIL, ILWMVPIYSVDSWIALKYPDI, PVTTVIALICQLTGVYGEGDF, YLVIINNVSQVFAMYCLVLFY, VVFVSFWQAVFIAILVKAGVI, and VATGLQDFIICVEMFLAAVAH. Over residues 369–378 the composition is skewed to polar residues; the sequence is TSLLSSSTQD. Residues 369–422 form a disordered region; the sequence is TSLLSSSTQDPISAASSIPPSPSGHYQGFGQTITPQTTPTATTMPEELYSADSP. Positions 399–411 are enriched in low complexity; it reads QTITPQTTPTATT.

Belongs to the TMEM184 family.

The protein localises to the membrane. Its function is as follows. May play a role in cell growth. The sequence is that of Transmembrane protein 184C (tmem184c) from Xenopus tropicalis (Western clawed frog).